Consider the following 529-residue polypeptide: Ribonuclease Y (529 aa).

Residues 4-24 (GLIYISLEVLVACLITALIMY) form a helical membrane-spanning segment. The 82-residue stretch at 216–297 (LTTRIALPCS…NRIEEVYHRV (82 aa)) folds into the KH domain. The HD domain occupies 342 to 435 (ALQHSKEVAL…VCAADALSAG (94 aa)).

The protein belongs to the RNase Y family.

The protein resides in the cell membrane. Functionally, endoribonuclease that initiates mRNA decay. The chain is Ribonuclease Y from Helicobacter pylori (strain HPAG1).